Reading from the N-terminus, the 317-residue chain is GTPase Era (317 aa).

Residues 23-190 (RSGFVALIGP…MDYLVETLPE (168 aa)) form the Era-type G domain. Residues 31–38 (GPTNAGKS) form a G1 region. Residue 31-38 (GPTNAGKS) participates in GTP binding. Positions 57–61 (QTTRA) are G2. The segment at 78-81 (DTPG) is G3. GTP-binding positions include 78-82 (DTPGI) and 140-143 (NKID). Residues 140–143 (NKID) form a G4 region. The segment at 169-171 (ISA) is G5. Residues 221-298 (LHQELPYASH…HLFLFVKVRE (78 aa)) form the KH type-2 domain.

It belongs to the TRAFAC class TrmE-Era-EngA-EngB-Septin-like GTPase superfamily. Era GTPase family. In terms of assembly, monomer.

Its subcellular location is the cytoplasm. The protein resides in the cell inner membrane. Its function is as follows. An essential GTPase that binds both GDP and GTP, with rapid nucleotide exchange. Plays a role in 16S rRNA processing and 30S ribosomal subunit biogenesis and possibly also in cell cycle regulation and energy metabolism. The sequence is that of GTPase Era from Agrobacterium fabrum (strain C58 / ATCC 33970) (Agrobacterium tumefaciens (strain C58)).